Here is a 171-residue protein sequence, read N- to C-terminus: MEFPDLGKHCSEPTCKQLDFLPITCDACKQDFCKDHFSYSGHKCPFAFKKDVQVPVCPLCNAPIPVRRGDIPDVVVGEHMDRDCTFHPGRNRNKVFTHRCSKEGCRKKEMLQLACAQCHGNFCIQHRHPLDHNCQAGSSSVSRGRSSASRAAEQKPSGVSWLAQRLRRTVK.

2 AN1-type zinc fingers span residues 4-52 (PDLG…KKDV) and 94-142 (KVFT…SSVS). Zn(2+) contacts are provided by Cys-10, Cys-15, Cys-25, Cys-28, Cys-33, His-36, His-42, Cys-44, Cys-100, Cys-105, Cys-115, Cys-118, Cys-123, His-126, His-132, and Cys-134. The interval 135-171 (QAGSSSVSRGRSSASRAAEQKPSGVSWLAQRLRRTVK) is disordered. Residues 136–151 (AGSSSVSRGRSSASRA) show a composition bias toward low complexity.

It localises to the cytoplasm. The protein localises to the nucleus. The polypeptide is AN1-type zinc finger protein 2A (Zfand2a) (Rattus norvegicus (Rat)).